The primary structure comprises 142 residues: Hemoglobin subunit alpha (142 aa).

S1 is modified (N-acetylserine). The 142-residue stretch at 1-142 (SLSDKDKAAV…LSLALAEKYR (142 aa)) folds into the Globin domain. The heme b site is built by H59 and H88.

The protein belongs to the globin family. In terms of assembly, heterotetramer of two alpha chains and two beta chains. In terms of tissue distribution, red blood cells.

Involved in oxygen transport from gills to the various peripheral tissues. This chain is Hemoglobin subunit alpha, found in Lycodes reticulatus (Arctic eelpout).